A 137-amino-acid polypeptide reads, in one-letter code: Crustacean hyperglycemic hormones (137 aa).

The signal sequence occupies residues 1–28; the sequence is MVSFRTMWSLVVVVVVVAASLGSSGVHG. At Q64 the chain carries Pyrrolidone carboxylic acid. Position 66 is a D-phenylalanine; in form CHH-II (F66). 3 disulfide bridges follow: C70-C106, C86-C102, and C89-C115. At V135 the chain carries Valine amide.

It belongs to the arthropod CHH/MIH/GIH/VIH hormone family. In terms of tissue distribution, produced by the medulla terminalis X-organ in the eyestalks and transported to the sinus gland where they are stored and released.

Its subcellular location is the secreted. Functionally, hormone found in the sinus gland of isopods and decapods which controls the blood sugar level. Has a secretagogue action over the amylase released from the midgut gland. May act as a stress hormone and may be involved in the control of molting and reproduction. The polypeptide is Crustacean hyperglycemic hormones (Procambarus clarkii (Red swamp crayfish)).